A 354-amino-acid chain; its full sequence is Uroporphyrinogen decarboxylase (354 aa).

Substrate contacts are provided by residues 27–31 (RQAGR), Phe46, Asp77, Tyr154, Ser209, and His327.

Belongs to the uroporphyrinogen decarboxylase family. As to quaternary structure, homodimer.

It localises to the cytoplasm. It catalyses the reaction uroporphyrinogen III + 4 H(+) = coproporphyrinogen III + 4 CO2. It functions in the pathway porphyrin-containing compound metabolism; protoporphyrin-IX biosynthesis; coproporphyrinogen-III from 5-aminolevulinate: step 4/4. Its function is as follows. Catalyzes the decarboxylation of four acetate groups of uroporphyrinogen-III to yield coproporphyrinogen-III. The polypeptide is Uroporphyrinogen decarboxylase (Shewanella oneidensis (strain ATCC 700550 / JCM 31522 / CIP 106686 / LMG 19005 / NCIMB 14063 / MR-1)).